Here is a 380-residue protein sequence, read N- to C-terminus: Queuine tRNA-ribosyltransferase (380 aa).

Residue aspartate 96 is the Proton acceptor of the active site. Residues 96–100, aspartate 150, glutamine 193, and glycine 220 contribute to the substrate site; that span reads DSGGF. Positions 251–257 are RNA binding; sequence GVGAPDS. Aspartate 270 (nucleophile) is an active-site residue. Residues 275–279 form an RNA binding; important for wobble base 34 recognition region; sequence TRIAR. Residues cysteine 308, cysteine 310, cysteine 313, and histidine 339 each contribute to the Zn(2+) site.

The protein belongs to the queuine tRNA-ribosyltransferase family. As to quaternary structure, homodimer. Within each dimer, one monomer is responsible for RNA recognition and catalysis, while the other monomer binds to the replacement base PreQ1. Zn(2+) serves as cofactor.

It carries out the reaction 7-aminomethyl-7-carbaguanine + guanosine(34) in tRNA = 7-aminomethyl-7-carbaguanosine(34) in tRNA + guanine. It functions in the pathway tRNA modification; tRNA-queuosine biosynthesis. In terms of biological role, catalyzes the base-exchange of a guanine (G) residue with the queuine precursor 7-aminomethyl-7-deazaguanine (PreQ1) at position 34 (anticodon wobble position) in tRNAs with GU(N) anticodons (tRNA-Asp, -Asn, -His and -Tyr). Catalysis occurs through a double-displacement mechanism. The nucleophile active site attacks the C1' of nucleotide 34 to detach the guanine base from the RNA, forming a covalent enzyme-RNA intermediate. The proton acceptor active site deprotonates the incoming PreQ1, allowing a nucleophilic attack on the C1' of the ribose to form the product. After dissociation, two additional enzymatic reactions on the tRNA convert PreQ1 to queuine (Q), resulting in the hypermodified nucleoside queuosine (7-(((4,5-cis-dihydroxy-2-cyclopenten-1-yl)amino)methyl)-7-deazaguanosine). This Streptococcus uberis (strain ATCC BAA-854 / 0140J) protein is Queuine tRNA-ribosyltransferase.